The following is a 276-amino-acid chain: Thiazole synthase (276 aa).

Lysine 112 (schiff-base intermediate with DXP) is an active-site residue. 1-deoxy-D-xylulose 5-phosphate-binding positions include glycine 173, 199–200 (AG), and 221–222 (NT).

Belongs to the ThiG family. As to quaternary structure, homotetramer. Forms heterodimers with either ThiH or ThiS.

Its subcellular location is the cytoplasm. It catalyses the reaction [ThiS sulfur-carrier protein]-C-terminal-Gly-aminoethanethioate + 2-iminoacetate + 1-deoxy-D-xylulose 5-phosphate = [ThiS sulfur-carrier protein]-C-terminal Gly-Gly + 2-[(2R,5Z)-2-carboxy-4-methylthiazol-5(2H)-ylidene]ethyl phosphate + 2 H2O + H(+). It participates in cofactor biosynthesis; thiamine diphosphate biosynthesis. In terms of biological role, catalyzes the rearrangement of 1-deoxy-D-xylulose 5-phosphate (DXP) to produce the thiazole phosphate moiety of thiamine. Sulfur is provided by the thiocarboxylate moiety of the carrier protein ThiS. In vitro, sulfur can be provided by H(2)S. This chain is Thiazole synthase, found in Synechococcus sp. (strain ATCC 27144 / PCC 6301 / SAUG 1402/1) (Anacystis nidulans).